Reading from the N-terminus, the 395-residue chain is ATP phosphoribosyltransferase regulatory subunit (395 aa).

The protein belongs to the class-II aminoacyl-tRNA synthetase family. HisZ subfamily. As to quaternary structure, heteromultimer composed of HisG and HisZ subunits.

Its subcellular location is the cytoplasm. It participates in amino-acid biosynthesis; L-histidine biosynthesis; L-histidine from 5-phospho-alpha-D-ribose 1-diphosphate: step 1/9. Functionally, required for the first step of histidine biosynthesis. May allow the feedback regulation of ATP phosphoribosyltransferase activity by histidine. This is ATP phosphoribosyltransferase regulatory subunit from Pseudomonas putida (strain ATCC 700007 / DSM 6899 / JCM 31910 / BCRC 17059 / LMG 24140 / F1).